Reading from the N-terminus, the 556-residue chain is MIVFKNTKIIDVYTGEVVKGNVAVERDKISFVDLNDEIDKIIEKIKEDVKVIDLKGKYLSPTFIDGHIHIESSHLIPSEFEKFVLKSGVSKVVIDPHEIANIAGKEGILFMLNDAKILDVYVMLPSCVPATNLETSGAEITAENIEELILLDNVLGLGEVMNYPAVINEDEEMLKKIEVAKKYNKLIDGHCPKLKGWELNKYISHGIMSDHESVDEDEALEKLRLGLKLMIREGTASKNIYLLNICKKIKDFRNIMLVSDDVCIKDLDGYMLNILRKATNYVSPIEAIQMVTINPANYFGFDVGIKAGNEASFVIFEDLDNFKVYNIVIKGRFLDDVLNELNKNKKRKIPEKLMNTLKYQYKNEGDFLIKGIDYKERDGFIRVIKPLKDSLITEELIFSTEEIKILLNENAINKIFVIERHKNTGNIGKGLIYNFLEEGALASSYAHDSHNVIAIGNNEKDLALAVNKLKDIGGGFIAAKDGEVVEYLPLPVGGIMGDDGKYIAEKINALYKKIEGWSSFENPFLSMSFFSLPVIPELKITDKGLVKDMQLVDLFI.

This sequence belongs to the metallo-dependent hydrolases superfamily. Adenine deaminase family. It depends on Mn(2+) as a cofactor.

It carries out the reaction adenine + H2O + H(+) = hypoxanthine + NH4(+). The sequence is that of Adenine deaminase from Methanocaldococcus jannaschii (strain ATCC 43067 / DSM 2661 / JAL-1 / JCM 10045 / NBRC 100440) (Methanococcus jannaschii).